We begin with the raw amino-acid sequence, 236 residues long: MTIYLPELEQEHDASFPDIESALHDPDGLLAMGGDLTPKRLLLAYSHGIFPWYSNDDPILWWSPSIRGVFIPENYTPSKSLKKFFKKSGYSITINHATSDVISLCASTRPAEETWIMPEMIEAYQNLAKLGHCHSVEVWFNNELVGGLYGLQIGQVFCGESMFSIKTNASKIALWKFCEHFVAFGGKLIDCQMMNPHLESLGAIPMERPIFNERLQVFSAISVFENCYQPQSLSNG.

The protein belongs to the L/F-transferase family.

It localises to the cytoplasm. It catalyses the reaction N-terminal L-lysyl-[protein] + L-leucyl-tRNA(Leu) = N-terminal L-leucyl-L-lysyl-[protein] + tRNA(Leu) + H(+). It carries out the reaction N-terminal L-arginyl-[protein] + L-leucyl-tRNA(Leu) = N-terminal L-leucyl-L-arginyl-[protein] + tRNA(Leu) + H(+). The catalysed reaction is L-phenylalanyl-tRNA(Phe) + an N-terminal L-alpha-aminoacyl-[protein] = an N-terminal L-phenylalanyl-L-alpha-aminoacyl-[protein] + tRNA(Phe). In terms of biological role, functions in the N-end rule pathway of protein degradation where it conjugates Leu, Phe and, less efficiently, Met from aminoacyl-tRNAs to the N-termini of proteins containing an N-terminal arginine or lysine. The protein is Leucyl/phenylalanyl-tRNA--protein transferase of Aliivibrio salmonicida (strain LFI1238) (Vibrio salmonicida (strain LFI1238)).